The primary structure comprises 398 residues: Dual-specificity RNA methyltransferase RlmN (398 aa).

The active-site Proton acceptor is glutamate 119. One can recognise a Radical SAM core domain in the interval 125 to 364 (DGDRATLCVS…TIVRKTRGDD (240 aa)). Cysteine 132 and cysteine 369 are oxidised to a cystine. [4Fe-4S] cluster-binding residues include cysteine 139, cysteine 143, and cysteine 146. Residues 193 to 194 (GE), serine 225, 247 to 249 (SLH), and asparagine 326 each bind S-adenosyl-L-methionine. Catalysis depends on cysteine 369, which acts as the S-methylcysteine intermediate.

Belongs to the radical SAM superfamily. RlmN family. [4Fe-4S] cluster is required as a cofactor.

Its subcellular location is the cytoplasm. It catalyses the reaction adenosine(2503) in 23S rRNA + 2 reduced [2Fe-2S]-[ferredoxin] + 2 S-adenosyl-L-methionine = 2-methyladenosine(2503) in 23S rRNA + 5'-deoxyadenosine + L-methionine + 2 oxidized [2Fe-2S]-[ferredoxin] + S-adenosyl-L-homocysteine. It carries out the reaction adenosine(37) in tRNA + 2 reduced [2Fe-2S]-[ferredoxin] + 2 S-adenosyl-L-methionine = 2-methyladenosine(37) in tRNA + 5'-deoxyadenosine + L-methionine + 2 oxidized [2Fe-2S]-[ferredoxin] + S-adenosyl-L-homocysteine. In terms of biological role, specifically methylates position 2 of adenine 2503 in 23S rRNA and position 2 of adenine 37 in tRNAs. m2A2503 modification seems to play a crucial role in the proofreading step occurring at the peptidyl transferase center and thus would serve to optimize ribosomal fidelity. This Serratia proteamaculans (strain 568) protein is Dual-specificity RNA methyltransferase RlmN.